A 199-amino-acid polypeptide reads, in one-letter code: Probable GTP-binding protein EngB (199 aa).

One can recognise an EngB-type G domain in the interval 21–195 (IYTEIAFLGR…EQKIILESLG (175 aa)). GTP-binding positions include 29–36 (GRSNVGKS), 56–60 (GKTQL), 81–84 (DLPG), 151–154 (TKAD), and 174–176 (VSN). Mg(2+) is bound by residues Ser36 and Thr58.

Belongs to the TRAFAC class TrmE-Era-EngA-EngB-Septin-like GTPase superfamily. EngB GTPase family. The cofactor is Mg(2+).

In terms of biological role, necessary for normal cell division and for the maintenance of normal septation. The sequence is that of Probable GTP-binding protein EngB from Campylobacter lari (strain RM2100 / D67 / ATCC BAA-1060).